We begin with the raw amino-acid sequence, 416 residues long: uncharacterized protein (416 aa).

Residues 341 to 360 form a disordered region; the sequence is EDREKGSQHTNNTHHHKRNL.

This is an uncharacterized protein from Human cytomegalovirus (strain AD169) (HHV-5).